The chain runs to 263 residues: Small ribosomal subunit protein eS4 (263 aa).

The region spanning 42–104 (LPLIIFLRNR…TGEHFRLVYD (63 aa)) is the S4 RNA-binding domain.

It belongs to the eukaryotic ribosomal protein eS4 family. In terms of assembly, component of the small ribosomal subunit.

Its subcellular location is the cytoplasm. Component of the small ribosomal subunit. The ribosome is a large ribonucleoprotein complex responsible for the synthesis of proteins in the cell. This chain is Small ribosomal subunit protein eS4 (rps4), found in Xenopus tropicalis (Western clawed frog).